A 272-amino-acid chain; its full sequence is MKNTGKRIDLIANRKPQSQRVLYELRDRLKRNQFILNDTNPDIVISIGGDGMLLSAFHKYENQLEKVRFIGLHTGHLGFYTDYRDFELDKLVTNLQLDTGARVSYPVLNVKVFLENGEVKIFRALNEASIRRSDRTMVADIVINGVPFERFRGDGLTVSTPTGSTAYNKSLGGAVLHPTIEALQLTEIASLNNRVYRTLGSSIIVPKKDKIELIPTRNDYHTISVDNSVYSFRNIERIEYQIAHHKIHFVATPSHTSFWNRVKDAFIGEVDE.

The Proton acceptor role is filled by Asp50. Residues 50-51 (DG), 126-127 (NE), Arg152, Asp154, 165-170 (TAYNKS), and Ala189 contribute to the NAD(+) site.

This sequence belongs to the NAD kinase family. A divalent metal cation is required as a cofactor.

It localises to the cytoplasm. The enzyme catalyses NAD(+) + ATP = ADP + NADP(+) + H(+). Involved in the regulation of the intracellular balance of NAD and NADP, and is a key enzyme in the biosynthesis of NADP. Catalyzes specifically the phosphorylation on 2'-hydroxyl of the adenosine moiety of NAD to yield NADP. This Streptococcus pneumoniae (strain Hungary19A-6) protein is NAD kinase.